The sequence spans 483 residues: MSRYLARYMVSRYFSSASSRPLHVCIVGSGPAGFYTADKVLKAHEGAHVDIIDRLPTPFGLVRSGVAPDHPETKIAINQFSRVAQHERCSFIGNVKLGSDLSLSELRDLYHVVVLAYGAESDKDLGIPGESLSGIYSAREFVWWYNGHPDYSSLKPDLKTSDSAVILGQGNVALDVARILLRPTTELASTDIATHALSALKESSIRKVYLIGRRGPVQAALTAKELREVLGIKNLHIRIKQTDLSVTPADEEEMKTSRARKRIYELLSKAAAAAKTSEADPDQRELHFVFFRQPDQFLESDERKGHVSGVNLQKTILESVGTGKQIAVGTGEFEDLNCSMVLKAIGYKSVPVNGLPFDHKKGVVPNVKGRVVSHTSGDISQTEPGLYVCGWLKRGPVGIIATNLYCAEETVGSISEDIEEGVWKSSKAGSKGLMQLLEKRKVKKVEFSGWEKIDAKEKQMGIERNKPREKLVTWEDLLAAAAN.

The N-terminal 14 residues, 1–14 (MSRYLARYMVSRYF), are a transit peptide targeting the mitochondrion. FAD is bound by residues Ala-32, Asp-53, Leu-61, and Leu-97. NADP(+) is bound by residues 169 to 172 (QGNV), 213 to 214 (RR), and Glu-225. FAD is bound by residues Trp-391 and 398–400 (GII). Gly-398 contributes to the NADP(+) binding site.

Belongs to the ferredoxin--NADP reductase type 1 family. The cofactor is FAD.

It localises to the mitochondrion. The enzyme catalyses 2 reduced [adrenodoxin] + NADP(+) + H(+) = 2 oxidized [adrenodoxin] + NADPH. In terms of biological role, associates in vitro with the adrenodoxin-like protein MFDX1 to form an efficient low potential electron transfer chain that is able to reduce cytochrome C. Functions as accessory mitochondrial protein involved with BIO2 in the plant biotin synthase reaction. This is NADPH:adrenodoxin oxidoreductase, mitochondrial from Arabidopsis thaliana (Mouse-ear cress).